A 543-amino-acid chain; its full sequence is uncharacterized protein (543 aa).

One can recognise a TRAM domain in the interval 1-59; that stretch reads MLKKNDIVEVEIVDLTHEGAGVAKVDGLVFFVENALPSEKILMRVLKVNKKIGFGKVEK. S-adenosyl-L-methionine-binding residues include glutamine 283, tyrosine 312, glutamate 333, and aspartate 381. The active-site Nucleophile is cysteine 408.

This sequence belongs to the class I-like SAM-binding methyltransferase superfamily. RNA M5U methyltransferase family.

This is an uncharacterized protein from Streptococcus pneumoniae (strain ATCC BAA-255 / R6).